The chain runs to 223 residues: Probable transaldolase (223 aa).

Lys92 (schiff-base intermediate with substrate) is an active-site residue.

The protein belongs to the transaldolase family. Type 3B subfamily.

It localises to the cytoplasm. It carries out the reaction D-sedoheptulose 7-phosphate + D-glyceraldehyde 3-phosphate = D-erythrose 4-phosphate + beta-D-fructose 6-phosphate. Its pathway is carbohydrate degradation; pentose phosphate pathway; D-glyceraldehyde 3-phosphate and beta-D-fructose 6-phosphate from D-ribose 5-phosphate and D-xylulose 5-phosphate (non-oxidative stage): step 2/3. Functionally, transaldolase is important for the balance of metabolites in the pentose-phosphate pathway. This chain is Probable transaldolase, found in Thermus thermophilus (strain ATCC 27634 / DSM 579 / HB8).